A 423-amino-acid polypeptide reads, in one-letter code: Methanol:N,N-dimethyl-4-nitrosoaniline oxidoreductase (423 aa).

This sequence belongs to the iron-containing alcohol dehydrogenase family. In terms of assembly, homodecamer. Mg(2+) is required as a cofactor. Zn(2+) serves as cofactor. The cofactor is NADPH.

The catalysed reaction is methanol + A = formaldehyde + AH2. In terms of biological role, catalyzes the oxidation of methanol to yield formaldehyde. While the in vivo electron acceptor is not known, N,N-dimethyl-4-nitrosoaniline (NDMA) can serve this function in vitro and is reduced to 4-(hydroxylamino)-N,N-dimethylaniline. It is also able to use ethanol and formaldehyde with an activity comparable to methanol, and has a weak activity with methylamine as substrate. This chain is Methanol:N,N-dimethyl-4-nitrosoaniline oxidoreductase, found in Mycobacterium sp. (strain DSM 3803 / JC1).